The sequence spans 361 residues: Caffeic acid 3-O-methyltransferase 2 (361 aa).

Position 128 to 134 (128 to 134 (MNQDKVL)) interacts with substrate. Positions 160 to 178 (AFEYHGTDPRFNKVFNQGM) are substrate binding. G206, D229, D249, M250, and K263 together coordinate S-adenosyl-L-methionine. H267 acts as the Proton acceptor in catalysis.

The protein belongs to the class I-like SAM-binding methyltransferase superfamily. Cation-independent O-methyltransferase family. COMT subfamily. In terms of assembly, homodimer.

The catalysed reaction is (E)-caffeate + S-adenosyl-L-methionine = (E)-ferulate + S-adenosyl-L-homocysteine + H(+). The protein operates within aromatic compound metabolism; phenylpropanoid biosynthesis. In terms of biological role, catalyzes the conversion of caffeic acid to ferulic acid and of 5-hydroxyferulic acid to sinapic acid. The resulting products may subsequently be converted to the corresponding alcohols that are incorporated into lignins. The sequence is that of Caffeic acid 3-O-methyltransferase 2 (COMT2) from Ocimum basilicum (Sweet basil).